A 341-amino-acid chain; its full sequence is B3 domain-containing transcription factor VRN1 (341 aa).

Positions 5–98 (FFHKLIFSST…AFSVYIFNLS (94 aa)) form a DNA-binding region, TF-B3 1. Positions 166–223 (GPVKAEEPTPTPKIPKKRGRKKKNADPEEINSSAPRDDDPENRSKFYESASARKRTVT) are disordered. Residues 179–188 (IPKKRGRKKK) are compositionally biased toward basic residues. Basic and acidic residues predominate over residues 200–211 (PRDDDPENRSKF). Residues 244-338 (FRVVLRPSYL…VLKVTAFRVN (95 aa)) constitute a DNA-binding region (TF-B3 2).

Expressed in roots and at lower levels in aerial parts.

Its subcellular location is the nucleus. Essential protein. Involved in the regulation of vernalization. Acts as a transcriptional repressor of FLC, a major target of the vernalization pathway. Binds DNA in vitro in a non-sequence-specific manner. This is B3 domain-containing transcription factor VRN1 from Arabidopsis thaliana (Mouse-ear cress).